Consider the following 477-residue polypeptide: MAASALRGLAVAGGGESSESEDDGWEIGYVDQTSQKLKGQMLPIEEKKEKFKKALTTGDVSLVQELLDSGIISVDATFRYGWTPLMYAASVANAELVRVLLDRGANASFEKDKQTILITACSAHGSEEQILKCVELLLSRNADPNVACRRLMTPIMYAARDGHTQVVALLVAHGAEVNTQDENGYTALTWAARQGRKSIVLKLLELGANKMLQTKDGKLPSEIAKRNKHHEIFSLLSFTLNPLEGKLQQLTKEETICKILTTDSDRENDHIFSSYAAFGDLEVFLHGLGLEHMTDLLKERDITLRHLLTMREDEFTKNGFTSKDQQKILTALKELEVEEIQFGELSEEAKLEISGDEFLNFLLKLNKQCGHLITAVQNIITELPVNSQKIVLEWASPQNFTSVCEELVNNVEDLSEEVCNLKDLIQKLQNERENDPTHIPLREEVSTWNSRILKRTAITVCGFGFLLFICKITFQRK.

Residues serine 17, serine 18, and serine 20 each carry the phosphoserine modification. ANK repeat units follow at residues 46 to 76 (EKKE…SVDA), 80 to 109 (YGWT…NASF), 112 to 146 (DKQT…DPNV), 150 to 179 (RLMT…EVNT), 183 to 212 (NGYT…NKML), and 216 to 245 (DGKL…PLEG). One can recognise an SAM domain in the interval 274–336 (SYAAFGDLEV…KILTALKELE (63 aa)).

In terms of assembly, interacts with DDX4, PIWIL1, RANBP9 and TDRD1.

Its subcellular location is the cytoplasm. Functionally, plays a central role during spermatogenesis by repressing transposable elements and preventing their mobilization, which is essential for the germline integrity. Acts via the piRNA metabolic process, which mediates the repression of transposable elements during meiosis by forming complexes composed of piRNAs and Piwi proteins and governs the methylation and subsequent repression of transposons. Its association with pi-bodies suggests a participation in the primary piRNAs metabolic process. Required prior to the pachytene stage to facilitate the production of multiple types of piRNAs, including those associated with repeats involved in the regulation of retrotransposons. May act by mediating protein-protein interactions during germ cell maturation. The chain is Ankyrin repeat, SAM and basic leucine zipper domain-containing protein 1 (ASZ1) from Ateles geoffroyi (Black-handed spider monkey).